The primary structure comprises 275 residues: Transmembrane protein 106B (275 aa).

Residues 1–24 are disordered; sequence MGKSFSHLPLHSNKEDGYDGMTST. The N-myristoyl glycine moiety is linked to residue G2. Residues 2 to 97 lie on the Cytoplasmic side of the membrane; that stretch reads GKSFSHLPLH…QRLRPRRTKL (96 aa). Residues 98–118 form a helical membrane-spanning segment; sequence YVMASVFVCLLLSGLAVFFLF. Residues 119–275 are Lumenal-facing; sequence PRSIDVKYIG…EYLNVLQPQQ (157 aa). N-linked (GlcNAc...) asparagine glycans are attached at residues N146, N152, N165, and N184. The cysteines at positions 215 and 254 are disulfide-linked. N-linked (GlcNAc...) asparagine glycosylation occurs at N257.

Belongs to the TMEM106 family. In terms of assembly, can form homomers. Interacts (via N-terminus) with MAP6 (via C-terminus). Interacts (via C-terminus) with the vacuolar-type ATPase subunit ATP6AP1. Interacts (via N-terminus) with AP2M1 and CLTC. Interacts with TMEM106C.

It is found in the late endosome membrane. The protein localises to the lysosome membrane. It localises to the cell membrane. Functionally, in neurons, involved in the transport of late endosomes/lysosomes. May be involved in dendrite morphogenesis and maintenance by regulating lysosomal trafficking. May act as a molecular brake for retrograde transport of late endosomes/lysosomes, possibly via its interaction with MAP6. In motoneurons, may mediate the axonal transport of lysosomes and axonal sorting at the initial segment. It remains unclear whether TMEM106B affects the transport of moving lysosomes in the anterograde or retrograde direction in neurites and whether it is particularly important in the sorting of lysosomes in axons or in dendrites. In neurons, may also play a role in the regulation of lysosomal size and responsiveness to stress. Required for proper lysosomal acidification. This is Transmembrane protein 106B (TMEM106B) from Bos taurus (Bovine).